A 234-amino-acid polypeptide reads, in one-letter code: Preprocaerulein type-4 (234 aa).

The N-terminal stretch at Met-1–Ala-26 is a signal peptide. A propeptide spanning residues Asp-27–Gly-73 is cleaved from the precursor. Tyr-77 bears the Sulfotyrosine mark. Phe-83 is modified (phenylalanine amide). Positions Asp-87 to Gly-137 are excised as a propeptide. Tyr-141 is modified (sulfotyrosine). Position 147 is a phenylalanine amide (Phe-147). The propeptide occupies Asp-151–Gly-152. Tyr-156 bears the Sulfotyrosine mark. Phe-162 is subject to Phenylalanine amide. The propeptide occupies Asp-166–Gly-216. The interval Leu-198 to Asp-234 is disordered. At Tyr-220 the chain carries Sulfotyrosine. Phe-226 carries the phenylalanine amide modification. A propeptide spanning residues Asn-230 to Asp-234 is cleaved from the precursor.

It belongs to the gastrin/cholecystokinin family. As to expression, expressed by the skin glands.

The protein resides in the secreted. Functionally, the pharmacological activities of caerulein are quite similar to the physiological activities of gastrin and related peptides. This Xenopus borealis (Kenyan clawed frog) protein is Preprocaerulein type-4.